The following is a 270-amino-acid chain: MVTAMNVSHEVNQLFQPYNFELSKDMRPFFEEYWATSFPIALIYLVLIAVGQNYMKERKGFNLQGPLILWSFCLAIFSILGAVRMWGIMGTVLLTGGLKQTVCFINFIDNSTVKFWSWVFLLSKVIELGDTAFIILRKRPLIFIHWYHHSTVLVYTSFGYKNKVPAGGWFVTMNFGVHAIMYTYYTLKAANVKPPKMLPMLITSLQILQMFVGAIVSILTYIWRQDQGCHTTMEHLFWSFILYMTYFILFAHFFCQTYIRPKVKAKTKSQ.

A glycan (N-linked (GlcNAc...) asparagine) is linked at N6. 2 helical membrane-spanning segments follow: residues 29–49 and 63–83; these read FFEE…VLIA and LQGP…LGAV. N110 carries an N-linked (GlcNAc...) asparagine glycan. The next 5 helical transmembrane spans lie at 115 to 135, 140 to 160, 164 to 184, 198 to 218, and 235 to 255; these read FWSW…AFII, PLIF…SFGY, VPAG…MYTY, LPML…IVSI, and HLFW…HFFC. The short motif at 266 to 270 is the Di-lysine motif element; the sequence is KTKSQ.

It belongs to the ELO family. ELOVL3 subfamily. As to quaternary structure, interacts with TECR. Post-translationally, N-Glycosylated. Testis.

The protein resides in the endoplasmic reticulum membrane. The catalysed reaction is a very-long-chain acyl-CoA + malonyl-CoA + H(+) = a very-long-chain 3-oxoacyl-CoA + CO2 + CoA. It catalyses the reaction eicosanoyl-CoA + malonyl-CoA + H(+) = 3-oxodocosanoyl-CoA + CO2 + CoA. It carries out the reaction hexadecanoyl-CoA + malonyl-CoA + H(+) = 3-oxooctadecanoyl-CoA + CO2 + CoA. The enzyme catalyses octadecanoyl-CoA + malonyl-CoA + H(+) = 3-oxoeicosanoyl-CoA + CO2 + CoA. The catalysed reaction is (9Z)-octadecenoyl-CoA + malonyl-CoA + H(+) = 3-oxo-(11Z)-eicosenoyl-CoA + CO2 + CoA. It catalyses the reaction (9Z,12Z)-octadecadienoyl-CoA + malonyl-CoA + H(+) = (11Z,14Z)-3-oxoicosa-11,14-dienoyl-CoA + CO2 + CoA. It carries out the reaction (9Z,12Z,15Z)-octadecatrienoyl-CoA + malonyl-CoA + H(+) = (11Z,14Z,17Z)-3-oxoeicosatrienoyl-CoA + CO2 + CoA. The enzyme catalyses docosanoyl-CoA + malonyl-CoA + H(+) = 3-oxotetracosanoyl-CoA + CO2 + CoA. The catalysed reaction is tetradecanoyl-CoA + malonyl-CoA + H(+) = 3-oxohexadecanoyl-CoA + CO2 + CoA. Its pathway is lipid metabolism; polyunsaturated fatty acid biosynthesis. Functionally, catalyzes the first and rate-limiting reaction of the four reactions that constitute the long-chain fatty acids elongation cycle. This endoplasmic reticulum-bound enzymatic process allows the addition of 2 carbons to the chain of long- and very long-chain fatty acids (VLCFAs) per cycle. Condensing enzyme that exhibits activity toward saturated and unsaturated acyl-CoA substrates with higher activity toward C18 acyl-CoAs, especially C18:0 acyl-CoAs. May participate in the production of saturated and monounsaturated VLCFAs of different chain lengths that are involved in multiple biological processes as precursors of membrane lipids and lipid mediators. The sequence is that of Very long chain fatty acid elongase 3 from Homo sapiens (Human).